A 246-amino-acid chain; its full sequence is uncharacterized protein (246 aa).

Residues methionine 1–glutamate 30 form the signal peptide.

This is an uncharacterized protein from Bacillus subtilis (strain 168).